The primary structure comprises 262 residues: Co-chaperone protein DjlA (262 aa).

Over 1-6 the chain is Periplasmic; that stretch reads MRFWGK. A helical transmembrane segment spans residues 7-30; it reads FFGFVIGFMFGRFFGALLGLWLGH. Residues 31–262 are Cytoplasmic-facing; that stretch reads LYDKRPGGGA…DRVKSERGMR (232 aa). Residues 196-262 form the J domain; it reads DAYHLLGITA…DRVKSERGMR (67 aa).

As to quaternary structure, homodimer.

Its subcellular location is the cell inner membrane. Its function is as follows. Regulatory DnaK co-chaperone. Direct interaction between DnaK and DjlA is needed for the induction of the wcaABCDE operon, involved in the synthesis of a colanic acid polysaccharide capsule, possibly through activation of the RcsB/RcsC phosphotransfer signaling pathway. The colanic acid capsule may help the bacterium survive conditions outside the host. In Shewanella oneidensis (strain ATCC 700550 / JCM 31522 / CIP 106686 / LMG 19005 / NCIMB 14063 / MR-1), this protein is Co-chaperone protein DjlA.